The primary structure comprises 898 residues: DNA topoisomerase 1 (898 aa).

Residues 2–126 (SKLVIVESPT…IKRMVFHEIT (125 aa)) enclose the Toprim domain. Mg(2+) contacts are provided by glutamate 8 and aspartate 95. A Topo IA-type catalytic domain is found at 141–583 (DENLVHAQET…GFFLGESGLE (443 aa)). Residues 175–180 (SAGRVQ) form an interaction with DNA region. Tyrosine 320 acts as the O-(5'-phospho-DNA)-tyrosine intermediate in catalysis. The disordered stretch occupies residues 840-898 (AEKAGSGKKTSRKKATTTAKGTKKTTSKKASATGTAKKTTTKRTTRKKAASPDQSSEAG). Residues 848 to 866 (KTSRKKATTTAKGTKKTTS) are compositionally biased toward basic residues. Residues 867-877 (KKASATGTAKK) are compositionally biased toward low complexity. The segment covering 878–888 (TTTKRTTRKKA) has biased composition (basic residues).

This sequence belongs to the type IA topoisomerase family. Monomer. Requires Mg(2+) as cofactor.

The catalysed reaction is ATP-independent breakage of single-stranded DNA, followed by passage and rejoining.. Releases the supercoiling and torsional tension of DNA, which is introduced during the DNA replication and transcription, by transiently cleaving and rejoining one strand of the DNA duplex. Introduces a single-strand break via transesterification at a target site in duplex DNA. The scissile phosphodiester is attacked by the catalytic tyrosine of the enzyme, resulting in the formation of a DNA-(5'-phosphotyrosyl)-enzyme intermediate and the expulsion of a 3'-OH DNA strand. The free DNA strand then undergoes passage around the unbroken strand, thus removing DNA supercoils. Finally, in the religation step, the DNA 3'-OH attacks the covalent intermediate to expel the active-site tyrosine and restore the DNA phosphodiester backbone. The sequence is that of DNA topoisomerase 1 from Synechocystis sp. (strain ATCC 27184 / PCC 6803 / Kazusa).